A 166-amino-acid chain; its full sequence is Fer3-like protein (166 aa).

The tract at residues 57 to 88 (FEEGDPEEEECEVDQGDGEEEEEEERGRGVSL) is disordered. Residues 60 to 80 (GDPEEEECEVDQGDGEEEEEE) show a composition bias toward acidic residues. The bHLH domain occupies 101 to 153 (AQRQAANIRERKRMFNLNEAFDQLRRKVPTFAYEKRLSRIETLRLAIVYISFM).

As to quaternary structure, heterodimer with TCF3/E12. Interacts with the bHLH domain of TCF3/E12.

The protein localises to the nucleus. Its function is as follows. Transcription factor that binds to the E-box and functions as inhibitor of transcription. DNA binding requires dimerization with an E protein. Inhibits transcription activation by ASCL1/MASH1 by sequestering E proteins. This Homo sapiens (Human) protein is Fer3-like protein (FERD3L).